The following is a 77-amino-acid chain: UPF0291 protein OB1671 (77 aa).

Positions Asp56 to His77 are disordered. The span at Pro57–His77 shows a compositional bias: basic and acidic residues.

It belongs to the UPF0291 family.

The protein localises to the cytoplasm. In Oceanobacillus iheyensis (strain DSM 14371 / CIP 107618 / JCM 11309 / KCTC 3954 / HTE831), this protein is UPF0291 protein OB1671.